A 267-amino-acid polypeptide reads, in one-letter code: Ribosomal RNA small subunit methyltransferase J (267 aa).

S-adenosyl-L-methionine is bound by residues 133–134 (ER) and aspartate 187.

Belongs to the methyltransferase superfamily. RsmJ family.

The protein localises to the cytoplasm. The catalysed reaction is guanosine(1516) in 16S rRNA + S-adenosyl-L-methionine = N(2)-methylguanosine(1516) in 16S rRNA + S-adenosyl-L-homocysteine + H(+). In terms of biological role, specifically methylates the guanosine in position 1516 of 16S rRNA. In Halorhodospira halophila (strain DSM 244 / SL1) (Ectothiorhodospira halophila (strain DSM 244 / SL1)), this protein is Ribosomal RNA small subunit methyltransferase J.